The chain runs to 343 residues: Signal peptide peptidase 1 (343 aa).

Residues 1-19 (MKTHERAANLALAGLSLAP) are Lumenal-facing. A helical membrane pass occupies residues 20–40 (LVVKVEPNVNVILTACLAVYV). Over 41 to 62 (GCYRSVKPTPPSETMSKEHAMR) the chain is Cytoplasmic. Residues 63 to 83 (FPLVGSAMLLSLFLLFKFLSK) form a helical membrane-spanning segment. Residues 84 to 87 (DLVN) lie on the Lumenal side of the membrane. A helical membrane pass occupies residues 88-108 (AVLTAYFFILGIAALCATLLP). At 109–136 (SIKRFLPKEWNDNAIVWCAPFFHSLSVE) the chain is on the cytoplasmic side. A helical membrane pass occupies residues 137-157 (FTKSQVVASIPGFFFCIWYAA). Residues 158–160 (KKH) lie on the Lumenal side of the membrane. The helical transmembrane segment at 161 to 181 (WLANNVLGISFCIQGIEMLSL) threads the bilayer. The Cytoplasmic segment spans residues 182 to 188 (GSFKTGA). The helical transmembrane segment at 189-209 (ILLAGLFFYDIFWVFFTPVMV) threads the bilayer. Asp198 is an active-site residue. Over 210–230 (SVAKSFDAPIKLLFPTGDAAR) the chain is Lumenal. The chain crosses the membrane as a helical span at residues 231–251 (PFSMLGLGDIVIPGIFVALAL). The active site involves Asp239. The Cytoplasmic portion of the chain corresponds to 252 to 266 (RFDVSRGIKNRYFNS). A helical transmembrane segment spans residues 267-287 (AFLGYTVGLTVTIIVMNWFQA). Residues 288 to 290 (AQP) are Lumenal-facing. Residues 290–292 (PAL) carry the PAL motif. Residues 291-311 (ALLYIVPGVIGFVAVHCLWNG) traverse the membrane as a helical segment. Residues 312-343 (EVKPLLEYNESKAEEEDAVEEDTDSKQNKKEE) are Cytoplasmic-facing. Residues 322-343 (SKAEEEDAVEEDTDSKQNKKEE) are disordered. The segment covering 324–334 (AEEEDAVEEDT) has biased composition (acidic residues). An Endoplasmic reticulum targeting signal motif is present at residues 340 to 343 (KKEE).

This sequence belongs to the peptidase A22B family. Ubiquitous.

It is found in the endoplasmic reticulum membrane. In terms of biological role, intramembrane-cleaving aspartic protease (I-CLiP) that cleaves type II membrane signal peptides in the hydrophobic plane of the membrane. Catalyzes intramembrane proteolysis of some signal peptides after they have been cleaved from a preprotein, resulting in the release of the fragment from the ER membrane into the cytoplasm. The polypeptide is Signal peptide peptidase 1 (SPP1) (Oryza sativa subsp. japonica (Rice)).